The primary structure comprises 503 residues: Catalase (503 aa).

The disordered stretch occupies residues 1 to 26 (MAKDDKRLTGLFGHPVSDRENSMTAG). Active-site residues include His56 and Asn129. A heme-binding site is contributed by Tyr339.

Belongs to the catalase family. As to quaternary structure, homodimer. Requires heme as cofactor.

The catalysed reaction is 2 H2O2 = O2 + 2 H2O. In terms of biological role, decomposes hydrogen peroxide into water and oxygen; serves to protect cells from the toxic effects of hydrogen peroxide. The protein is Catalase (katA) of Staphylococcus haemolyticus (strain JCSC1435).